We begin with the raw amino-acid sequence, 160 residues long: 2-C-methyl-D-erythritol 2,4-cyclodiphosphate synthase (160 aa).

Residues Asp11 and His13 each contribute to the a divalent metal cation site. Residues 11–13 (DIH) and 37–38 (HS) contribute to the 4-CDP-2-C-methyl-D-erythritol 2-phosphate site. His45 is a binding site for a divalent metal cation. Residues 59–61 (DIG), 135–138 (TTNE), and Arg145 contribute to the 4-CDP-2-C-methyl-D-erythritol 2-phosphate site.

This sequence belongs to the IspF family. In terms of assembly, homotrimer. Requires a divalent metal cation as cofactor.

It carries out the reaction 4-CDP-2-C-methyl-D-erythritol 2-phosphate = 2-C-methyl-D-erythritol 2,4-cyclic diphosphate + CMP. It participates in isoprenoid biosynthesis; isopentenyl diphosphate biosynthesis via DXP pathway; isopentenyl diphosphate from 1-deoxy-D-xylulose 5-phosphate: step 4/6. Involved in the biosynthesis of isopentenyl diphosphate (IPP) and dimethylallyl diphosphate (DMAPP), two major building blocks of isoprenoid compounds. Catalyzes the conversion of 4-diphosphocytidyl-2-C-methyl-D-erythritol 2-phosphate (CDP-ME2P) to 2-C-methyl-D-erythritol 2,4-cyclodiphosphate (ME-CPP) with a corresponding release of cytidine 5-monophosphate (CMP). In Nostoc punctiforme (strain ATCC 29133 / PCC 73102), this protein is 2-C-methyl-D-erythritol 2,4-cyclodiphosphate synthase.